A 906-amino-acid polypeptide reads, in one-letter code: Cadherin-2 (906 aa).

The N-terminal stretch at 1–25 (MCRIAGALRTLLPLLAALLQASVEA) is a signal peptide. Residues 26-159 (SGEIALCKTG…HSGHLQRQKR (134 aa)) constitute a propeptide that is removed on maturation. Phosphoserine; by FAM20C occurs at positions 96 and 135. 5 Cadherin domains span residues 160–267 (DWVI…RPEF), 268–382 (LHQV…PPEF), 383–497 (TAMT…NPYF), 498–603 (APNP…DNAP), and 604–714 (QVLP…DVDR). Topologically, residues 160 to 724 (DWVIPPINLP…IVGAGLGTGA (565 aa)) are extracellular. E170 provides a ligand contact to Ca(2+). A glycan (N-linked (GlcNAc...) asparagine) is linked at N190. Ca(2+)-binding residues include D226, E228, D259, M260, N261, D262, and N263. N273 carries an N-linked (GlcNAc...) asparagine glycan. Ca(2+) is bound by residues D293, D295, and N301. N325 carries N-linked (GlcNAc...) asparagine glycosylation. Ca(2+) is bound at residue D353. 4 N-linked (GlcNAc...) asparagine glycosylation sites follow: N402, N572, N651, and N692. The helical transmembrane segment at 725–745 (IIAILLCIIILLILVLMFVVW) threads the bilayer. Over 746–906 (MKRRDKERQA…LADMYGGGDD (161 aa)) the chain is Cytoplasmic. Low complexity predominate over residues 863–880 (SGSTAGSLSSLNSSSSGG). Residues 863–884 (SGSTAGSLSSLNSSSSGGEQDY) are disordered.

In terms of assembly, homodimer (via extracellular region). Can also form heterodimers with other cadherins (via extracellular region). Dimerization occurs in trans, i.e. with a cadherin chain from another cell. Interacts with CDCP1. Interacts with PCDH8; this complex may also include TAOK2. The interaction with PCDH8 may lead to internalization through TAOK2/p38 MAPK pathway. Identified in a complex containing FGFR4, NCAM1, CDH2, PLCG1, FRS2, SRC, SHC1, GAP43 and CTTN. May interact with OBSCN (via protein kinase domain 2). Interacts with FBXO45. In terms of processing, cleaved by MMP24. Ectodomain cleavage leads to the generation of a soluble 90 kDa N-terminal soluble fragment and a 45 kDa membrane-bound C-terminal fragment 1 (CTF1), which is further cleaved by gamma-secretase into a 35 kDa. Cleavage in neural stem cells by MMP24 affects CDH2-mediated anchorage of neural stem cells to ependymocytes in the adult subependymal zone, leading to modulate neural stem cell quiescence. May be phosphorylated by OBSCN.

Its subcellular location is the cell membrane. It localises to the sarcolemma. The protein resides in the cell junction. The protein localises to the cell surface. It is found in the desmosome. Its subcellular location is the adherens junction. In terms of biological role, calcium-dependent cell adhesion protein; preferentially mediates homotypic cell-cell adhesion by dimerization with a CDH2 chain from another cell. Cadherins may thus contribute to the sorting of heterogeneous cell types. Acts as a regulator of neural stem cells quiescence by mediating anchorage of neural stem cells to ependymocytes in the adult subependymal zone: upon cleavage by MMP24, CDH2-mediated anchorage is affected, leading to modulate neural stem cell quiescence. Plays a role in cell-to-cell junction formation between pancreatic beta cells and neural crest stem (NCS) cells, promoting the formation of processes by NCS cells. Required for proper neurite branching. Required for pre- and postsynaptic organization. CDH2 may be involved in neuronal recognition mechanism. In hippocampal neurons, may regulate dendritic spine density. This Homo sapiens (Human) protein is Cadherin-2 (CDH2).